A 164-amino-acid polypeptide reads, in one-letter code: Protein SprT (164 aa).

The SprT-like domain occupies 14-156 (QQAETFFKRP…LCKRCRETLV (143 aa)). Histidine 69 contacts Zn(2+). Residue glutamate 70 is part of the active site. Residue histidine 73 coordinates Zn(2+).

It belongs to the SprT family. It depends on Zn(2+) as a cofactor.

It localises to the cytoplasm. This is Protein SprT from Pseudomonas putida (strain W619).